A 190-amino-acid polypeptide reads, in one-letter code: Holliday junction branch migration complex subunit RuvA (190 aa).

Residues 1-64 (MIGSLTGIIE…DNLTQLYGFL (64 aa)) form a domain I region. The domain II stretch occupies residues 65–142 (DKQEQDYMRM…KMPIEETLII (78 aa)). Residue Lys-143 is a region of interest, flexible linker. The segment at 143-190 (KEDDSLAALISLGYDKLKAFNAIQEIKSDFPNANIQEIIRKALQKLSQ) is domain III.

The protein belongs to the RuvA family. Homotetramer. Forms an RuvA(8)-RuvB(12)-Holliday junction (HJ) complex. HJ DNA is sandwiched between 2 RuvA tetramers; dsDNA enters through RuvA and exits via RuvB. An RuvB hexamer assembles on each DNA strand where it exits the tetramer. Each RuvB hexamer is contacted by two RuvA subunits (via domain III) on 2 adjacent RuvB subunits; this complex drives branch migration. In the full resolvosome a probable DNA-RuvA(4)-RuvB(12)-RuvC(2) complex forms which resolves the HJ.

It is found in the cytoplasm. The RuvA-RuvB-RuvC complex processes Holliday junction (HJ) DNA during genetic recombination and DNA repair, while the RuvA-RuvB complex plays an important role in the rescue of blocked DNA replication forks via replication fork reversal (RFR). RuvA specifically binds to HJ cruciform DNA, conferring on it an open structure. The RuvB hexamer acts as an ATP-dependent pump, pulling dsDNA into and through the RuvAB complex. HJ branch migration allows RuvC to scan DNA until it finds its consensus sequence, where it cleaves and resolves the cruciform DNA. This Ehrlichia canis (strain Jake) protein is Holliday junction branch migration complex subunit RuvA.